The primary structure comprises 476 residues: ATP synthase subunit beta (476 aa).

An ATP-binding site is contributed by 154–161 (GGAGVGKT).

It belongs to the ATPase alpha/beta chains family. F-type ATPases have 2 components, CF(1) - the catalytic core - and CF(0) - the membrane proton channel. CF(1) has five subunits: alpha(3), beta(3), gamma(1), delta(1), epsilon(1). CF(0) has four main subunits: a(1), b(1), b'(1) and c(9-12).

The protein localises to the cell inner membrane. The catalysed reaction is ATP + H2O + 4 H(+)(in) = ADP + phosphate + 5 H(+)(out). Produces ATP from ADP in the presence of a proton gradient across the membrane. The catalytic sites are hosted primarily by the beta subunits. In Rhodopseudomonas palustris (strain BisB5), this protein is ATP synthase subunit beta.